The primary structure comprises 227 residues: uncharacterized protein (227 aa).

A signal peptide spans 1-23 (MKKRFSLIMMTGLLFGLTSPAFA). The region spanning 36–227 (NVAVLLDASG…FTQQSLMLSK (192 aa)) is the VWFA domain.

It to B.subtilis YwmD.

This is an uncharacterized protein from Bacillus subtilis (strain 168).